A 263-amino-acid polypeptide reads, in one-letter code: Orotidine 5'-phosphate decarboxylase (263 aa).

Substrate contacts are provided by residues Asp-36, 58–60 (KTH), 90–99 (DRKFADIGNT), Tyr-216, and Arg-234. Lys-92 functions as the Proton donor in the catalytic mechanism.

Belongs to the OMP decarboxylase family.

The catalysed reaction is orotidine 5'-phosphate + H(+) = UMP + CO2. The protein operates within pyrimidine metabolism; UMP biosynthesis via de novo pathway; UMP from orotate: step 2/2. In Komagataella pastoris (Yeast), this protein is Orotidine 5'-phosphate decarboxylase (URA3).